Here is a 398-residue protein sequence, read N- to C-terminus: MVTLITEKLQSQSLDDLTCKAEAGPLQYSAETLNKSGRLFPLELNDQSPWKVFSGGPPVRSQAATGPDFSFLPGLSAAAHTMGLQWQPQSPRPGAGLGAASTVDPSESTGSSTAPPTKRHCRSLSEPEELVRCRSPWRPGSSKVWTPVSKRRCDSGGSATRQGSPGAVLPRSAVWSTGPTSPATPRPSSASGGFVDSSEGSAGSGPLWCSAESCLPSTRRRPSLSQERLAGAGTPLPWASSSPTSTPALGGRRGLLRCRSQPCVLSGKRSRRKRRREEDARWTRPSLDFLKMTQTLKNSKSLCSLNYEDDDEDDTPVKTVLSSPCDSRGLPGITMPGCSQRGLRTSPVHPNLWASRESVTSDGSRRSSGDPRDGDSVGEEGVFPRARWELDLEQIENN.

Residues 85–253 form a disordered region; that stretch reads QWQPQSPRPG…TSTPALGGRR (169 aa). The segment covering 103-115 has biased composition (polar residues); it reads VDPSESTGSSTAP. Residues 123 to 132 are compositionally biased toward basic and acidic residues; that stretch reads SLSEPEELVR. Serine 125 bears the Phosphoserine mark. Low complexity-rich tracts occupy residues 176-193 and 234-250; these read STGP…ASGG and TPLP…PALG. The Nuclear localization signal signature appears at 268-276; sequence KRSRRKRRR. Serine 301 and serine 304 each carry phosphoserine. The tract at residues 336–398 is disordered; the sequence is PGCSQRGLRT…ELDLEQIENN (63 aa). The span at 363–375 shows a compositional bias: basic and acidic residues; it reads GSRRSSGDPRDGD.

The protein belongs to the FAM53 family.

Its subcellular location is the nucleus. In terms of biological role, may play an important role in neural development; the dorsomedial roof of the third ventricle. This is Protein FAM53A from Homo sapiens (Human).